A 78-amino-acid polypeptide reads, in one-letter code: Large ribosomal subunit protein bL28 (78 aa).

Belongs to the bacterial ribosomal protein bL28 family.

This Shigella boydii serotype 4 (strain Sb227) protein is Large ribosomal subunit protein bL28.